Reading from the N-terminus, the 288-residue chain is Co-chaperone protein DjlA (288 aa).

The Periplasmic segment spans residues 1-6 (MNFIGK). Residues 7-30 (ILGFIIGYRFGGLFGGIAGLILGH) traverse the membrane as a helical segment. Over 31 to 288 (IADKKLYELG…DLICKVKGWK (258 aa)) the chain is Cytoplasmic. The J domain occupies 222 to 288 (DAYKVLGVNA…DLICKVKGWK (67 aa)).

Homodimer.

The protein localises to the cell inner membrane. Its function is as follows. Regulatory DnaK co-chaperone. Direct interaction between DnaK and DjlA is needed for the induction of the wcaABCDE operon, involved in the synthesis of a colanic acid polysaccharide capsule, possibly through activation of the RcsB/RcsC phosphotransfer signaling pathway. The colanic acid capsule may help the bacterium survive conditions outside the host. This Mannheimia succiniciproducens (strain KCTC 0769BP / MBEL55E) protein is Co-chaperone protein DjlA.